Consider the following 49-residue polypeptide: Beta-toxin Rc1 (49 aa).

3 cysteine pairs are disulfide-bonded: Cys15–Cys31, Cys22–Cys40, and Cys26–Cys42.

It belongs to the long (4 C-C) scorpion toxin superfamily. Sodium channel inhibitor family. Beta subfamily. As to expression, expressed by the venom gland.

Its subcellular location is the secreted. Its function is as follows. Beta toxins bind voltage-independently at site-4 of sodium channels (Nav) and shift the voltage of activation toward more negative potentials thereby affecting sodium channel activation and promoting spontaneous and repetitive firing. This toxin acts on X.laevis Nav1.6/SCN8A and insect BgNav1 channels, and also displays a small but significant effect on X.laevis Nav1.4/SCN4A channels. In mice induces nociception (licking and lifting behaviors) during the first 15 minutes after injection, and increases the release of TNF-alpha in J774.1 cells. The sequence is that of Beta-toxin Rc1 from Rhopalurus crassicauda (Scorpion).